We begin with the raw amino-acid sequence, 107 residues long: Keratin, type I cytoskeletal 20 (107 aa).

Positions 1-7 are head; the sequence is GNLWVGN. A coil 1A region spans residues 8-43; sequence EKMTMKNLNDRLASYLEKVRSLEQSNSKFELQIKQW. The 100-residue stretch at 8 to 107 folds into the IF rod domain; the sequence is EKMTMKNLND…ETERGIRLAV (100 aa). The linker 1 stretch occupies residues 44-61; sequence YESNTPGISRDHSAYLQQ. A coil 1B region spans residues 62–107; it reads IQDLRNQIRDAQLQNARCVLQIDNAKLAAEDFRLKYETERGIRLAV.

This sequence belongs to the intermediate filament family. In terms of assembly, heterotetramer of two type I and two type II keratins. Associates with KRT8.

Functionally, plays a significant role in maintaining keratin filament organization in intestinal epithelia. When phosphorylated, plays a role in the secretion of mucin in the small intestine. This is Keratin, type I cytoskeletal 20 from Sus scrofa (Pig).